We begin with the raw amino-acid sequence, 130 residues long: Small ribosomal subunit protein uS9 (130 aa).

It belongs to the universal ribosomal protein uS9 family.

The sequence is that of Small ribosomal subunit protein uS9 from Pectobacterium carotovorum subsp. carotovorum (strain PC1).